A 256-amino-acid chain; its full sequence is Thiazole synthase (256 aa).

The Schiff-base intermediate with DXP role is filled by Lys-96. 1-deoxy-D-xylulose 5-phosphate is bound by residues Gly-157, 183 to 184 (AG), and 205 to 206 (NT).

This sequence belongs to the ThiG family. Homotetramer. Forms heterodimers with either ThiH or ThiS.

Its subcellular location is the cytoplasm. The enzyme catalyses [ThiS sulfur-carrier protein]-C-terminal-Gly-aminoethanethioate + 2-iminoacetate + 1-deoxy-D-xylulose 5-phosphate = [ThiS sulfur-carrier protein]-C-terminal Gly-Gly + 2-[(2R,5Z)-2-carboxy-4-methylthiazol-5(2H)-ylidene]ethyl phosphate + 2 H2O + H(+). It participates in cofactor biosynthesis; thiamine diphosphate biosynthesis. Its function is as follows. Catalyzes the rearrangement of 1-deoxy-D-xylulose 5-phosphate (DXP) to produce the thiazole phosphate moiety of thiamine. Sulfur is provided by the thiocarboxylate moiety of the carrier protein ThiS. In vitro, sulfur can be provided by H(2)S. The protein is Thiazole synthase of Bacillus cereus (strain AH187).